We begin with the raw amino-acid sequence, 142 residues long: Hemoglobin subunit alpha (142 aa).

A Globin domain is found at 2–142 (HLTADDKKHI…VSNVLTSKYR (141 aa)). Heme b is bound by residues His-59 and His-88.

It belongs to the globin family. In terms of assembly, heterotetramer of two alpha chains and two beta chains. In terms of tissue distribution, red blood cells.

Involved in oxygen transport from the lung to the various peripheral tissues. This is Hemoglobin subunit alpha (hba-A) from Xenopus tropicalis (Western clawed frog).